The chain runs to 470 residues: Serine--tRNA ligase (470 aa).

Position 272-274 (272-274 (TAE)) interacts with L-serine. 303–305 (RAE) contributes to the ATP binding site. E326 provides a ligand contact to L-serine. 393-396 (EISS) provides a ligand contact to ATP. S428 contributes to the L-serine binding site.

This sequence belongs to the class-II aminoacyl-tRNA synthetase family. Type-1 seryl-tRNA synthetase subfamily. As to quaternary structure, homodimer. The tRNA molecule binds across the dimer.

It localises to the cytoplasm. It carries out the reaction tRNA(Ser) + L-serine + ATP = L-seryl-tRNA(Ser) + AMP + diphosphate + H(+). The enzyme catalyses tRNA(Sec) + L-serine + ATP = L-seryl-tRNA(Sec) + AMP + diphosphate + H(+). The protein operates within aminoacyl-tRNA biosynthesis; selenocysteinyl-tRNA(Sec) biosynthesis; L-seryl-tRNA(Sec) from L-serine and tRNA(Sec): step 1/1. Functionally, catalyzes the attachment of serine to tRNA(Ser). Is also able to aminoacylate tRNA(Sec) with serine, to form the misacylated tRNA L-seryl-tRNA(Sec), which will be further converted into selenocysteinyl-tRNA(Sec). The protein is Serine--tRNA ligase of Nitrobacter hamburgensis (strain DSM 10229 / NCIMB 13809 / X14).